A 275-amino-acid chain; its full sequence is Diaminopimelate epimerase (275 aa).

N13, Q46, and N66 together coordinate substrate. C75 functions as the Proton donor in the catalytic mechanism. Substrate contacts are provided by residues 76–77, N159, N192, and 210–211; these read GN and ER. Residue C219 is the Proton acceptor of the active site. Substrate is bound at residue 220–221; that stretch reads GT.

The protein belongs to the diaminopimelate epimerase family. As to quaternary structure, homodimer.

The protein localises to the cytoplasm. It carries out the reaction (2S,6S)-2,6-diaminopimelate = meso-2,6-diaminopimelate. Its pathway is amino-acid biosynthesis; L-lysine biosynthesis via DAP pathway; DL-2,6-diaminopimelate from LL-2,6-diaminopimelate: step 1/1. Functionally, catalyzes the stereoinversion of LL-2,6-diaminopimelate (L,L-DAP) to meso-diaminopimelate (meso-DAP), a precursor of L-lysine and an essential component of the bacterial peptidoglycan. This chain is Diaminopimelate epimerase, found in Psychromonas ingrahamii (strain DSM 17664 / CCUG 51855 / 37).